The primary structure comprises 690 residues: Polyribonucleotide nucleotidyltransferase (690 aa).

Residues D483 and D489 each coordinate Mg(2+). In terms of domain architecture, KH spans 550–609; the sequence is PKMEQITVDKKDIAAVIGKGGATIREIVEKSGAKLDVNDEGVVTVAAPDEESRNIAMQMI. One can recognise an S1 motif domain in the interval 619–686; the sequence is NKIYSGKVMK…DRGKVKLSMK (68 aa).

It belongs to the polyribonucleotide nucleotidyltransferase family. The cofactor is Mg(2+).

The protein localises to the cytoplasm. The enzyme catalyses RNA(n+1) + phosphate = RNA(n) + a ribonucleoside 5'-diphosphate. Its function is as follows. Involved in mRNA degradation. Catalyzes the phosphorolysis of single-stranded polyribonucleotides processively in the 3'- to 5'-direction. The polypeptide is Polyribonucleotide nucleotidyltransferase (Pelagibacter ubique (strain HTCC1062)).